Consider the following 208-residue polypeptide: Thioredoxin domain-containing protein 9 (208 aa).

Positions 68–179 (YEEVADEKEF…MENRLARSEV (112 aa)) constitute a Thioredoxin domain.

In terms of tissue distribution, expressed throughout the body with high expression in the nervous system, including the ventral nerve cord and tail neurons, and vulva.

Its subcellular location is the nucleus. It localises to the cytoplasm. Functionally, required for normal microtubule organization and function. Regulates tubulin acetylation in ALM and PLM neurons. In Caenorhabditis elegans, this protein is Thioredoxin domain-containing protein 9.